The primary structure comprises 425 residues: G protein-activated inward rectifier potassium channel 2 (425 aa).

At 1–91 (MTMAKLTESM…ILTTLVDLKW (91 aa)) the chain is on the cytoplasmic side. A phosphoserine mark is found at Ser18 and Ser25. A helical transmembrane segment spans residues 92-116 (RFNLLIFVMVYTVTWLFFGMIWWLI). Over 117-140 (AYIRGDMDHVEDPSWTPCVTNLNG) the chain is Extracellular. The helical; Pore-forming intramembrane region spans 141–152 (FVSAFLFSIETE). Positions 153-159 (TTIGYGY) form an intramembrane region, pore-forming. A Selectivity filter motif is present at residues 154-159 (TIGYGY). Over 160–168 (RVITDKCPE) the chain is Extracellular. Residues 169–190 (GIILLLIQSVLGSIVNAFMVGC) form a helical membrane-spanning segment. The Cytoplasmic portion of the chain corresponds to 191 to 425 (MFVKISQPKK…VANLENESKV (235 aa)). Residues 392–425 (NQHAELETEEEEKNPEEQTERNGDVANLENESKV) are disordered. Residues 422–425 (ESKV) carry the PDZ-binding motif.

This sequence belongs to the inward rectifier-type potassium channel (TC 1.A.2.1) family. KCNJ6 subfamily. In terms of assembly, associates with KCNJ3/GIRK1 or KCNJ5/GRIK4 to form a G-protein-activated heteromultimer pore-forming unit. The resulting inward current is much larger. Interacts (via PDZ-binding motif) with SNX27 (via PDZ domain); the interaction is required when endocytosed to prevent degradation in lysosomes and promote recycling to the plasma membrane. In terms of tissue distribution, expressed in insulin-secreting cells and brain.

The protein localises to the membrane. It carries out the reaction K(+)(in) = K(+)(out). With respect to regulation, activated by phosphatidylinositol 4,5 biphosphate (PtdIns(4,5)P2). Functionally, inward rectifier potassium channels are characterized by a greater tendency to allow potassium to flow into the cell rather than out of it. Their voltage dependence is regulated by the concentration of extracellular potassium; as external potassium is raised, the voltage range of the channel opening shifts to more positive voltages. The inward rectification is mainly due to the blockage of outward current by internal magnesium. This potassium channel may be involved in the regulation of insulin secretion by glucose and/or neurotransmitters acting through G-protein-coupled receptors. The chain is G protein-activated inward rectifier potassium channel 2 (KCNJ6) from Mesocricetus auratus (Golden hamster).